A 187-amino-acid polypeptide reads, in one-letter code: MSKANLTHHFLIAAPELSDPRFEQALIYICRHDKHGALGLMVNRPLEQARVGKLLEDLDIEVTDAQVMEDLALEGGPMYPEVGFVLHTGQPEWASSFAISENVCITTSQDILKRIAAGQGVGHYQLCLGHASWGKKQLDRELANGDWLVCPADLNLLFDTPFEERWQMAADKIGVNFDYLSSDIGHA.

Belongs to the UPF0301 (AlgH) family.

The sequence is that of UPF0301 protein Pcryo_0062 from Psychrobacter cryohalolentis (strain ATCC BAA-1226 / DSM 17306 / VKM B-2378 / K5).